The chain runs to 506 residues: Chromodomain Y-like protein 2 (506 aa).

The Chromo domain maps to 7–67; that stretch reads YEVERIVDKR…LHMSKDKRIK (61 aa). The tract at residues 64–177 is disordered; the sequence is KRIKSGKQSS…RHFGNGSHQP (114 aa). The segment covering 88–98 has biased composition (basic and acidic residues); sequence KLSHRPSDPGK. Residues 101 to 120 are compositionally biased toward basic residues; sequence GTSHKRKRINPPLAKPKKGY. Over residues 133 to 143 the composition is skewed to polar residues; that stretch reads KTVSYRTTPSG.

As to quaternary structure, interacts (via chromo domain) with histone H3K9me3. Ubiquitously expressed.

The protein localises to the nucleus. In Homo sapiens (Human), this protein is Chromodomain Y-like protein 2 (CDYL2).